Consider the following 185-residue polypeptide: Protein N-terminal glutamine amidohydrolase (185 aa).

Residues Cys-14, His-62, and Asp-78 contribute to the active site.

Belongs to the NTAQ1 family. In terms of assembly, monomer.

The enzyme catalyses N-terminal L-glutaminyl-[protein] + H2O = N-terminal L-glutamyl-[protein] + NH4(+). Its function is as follows. Mediates the side-chain deamidation of N-terminal glutamine residues to glutamate, an important step in N-end rule pathway of protein degradation. Conversion of the resulting N-terminal glutamine to glutamate renders the protein susceptible to arginylation, polyubiquitination and degradation as specified by the N-end rule. Does not act on substrates with internal or C-terminal glutamine and does not act on non-glutamine residues in any position. In Caenorhabditis briggsae, this protein is Protein N-terminal glutamine amidohydrolase.